The primary structure comprises 373 residues: P2Y purinoceptor 1 (373 aa).

Residues 1–51 are Extracellular-facing; the sequence is MTEVLWPAVPNGTDTAFLADPGSPWGNSTVTSTAAVASPFKCALTKTGFQF. N-linked (GlcNAc...) asparagine glycosylation is found at Asn-11 and Asn-27. Disulfide bonds link Cys-42-Cys-296 and Cys-124-Cys-202. Residue Lys-46 participates in ADP binding. The helical transmembrane segment at 52-74 threads the bilayer; the sequence is YYLPAVYILVFIIGFLGNSVAIW. Topologically, residues 75–87 are cytoplasmic; the sequence is MFVFHMKPWSGIS. The helical transmembrane segment at 88-109 threads the bilayer; the sequence is VYMFNLALADFLYVLTLPALIF. The Extracellular portion of the chain corresponds to 110-125; that stretch reads YYFNKTDWIFGDAMCK. N-linked (GlcNAc...) asparagine glycosylation occurs at Asn-113. The helical transmembrane segment at 126-147 threads the bilayer; the sequence is LQRFIFHVNLYGSILFLTCISA. The Cytoplasmic portion of the chain corresponds to 148–166; that stretch reads HRYSGVVYPLKSLGRLKKK. The helical transmembrane segment at 167-188 threads the bilayer; the sequence is NAVYISVLVWLIVVVGISPILF. Over 189–214 the chain is Extracellular; sequence YSGTGIRKNKTITCYDTTSDEYLRSY. Residue Asn-197 is glycosylated (N-linked (GlcNAc...) asparagine). 203 to 205 is a binding site for ADP; it reads YDT. A helical transmembrane segment spans residues 215–237; it reads FIYSMCTTVAMFCVPLVLILGCY. Residues 238-260 lie on the Cytoplasmic side of the membrane; sequence GLIVRALIYKDLDNSPLRRKSIY. A helical membrane pass occupies residues 261–284; it reads LVIIVLTVFAVSYIPFHVMKTMNL. ADP-binding positions include 283-287, 303-306, and Arg-310; these read NLRAR and YATY. Residues 285–303 are Extracellular-facing; the sequence is RARLDFQTPEMCAFNDRVY. The helical transmembrane segment at 304 to 325 threads the bilayer; that stretch reads ATYQVTRGLASLNSCVDPILYF. Over 326-373 the chain is Cytoplasmic; sequence LAGDTFRRRLSRATRKASRRSEANLQSKSEDMTLNILSEFKQNGDTSL.

Belongs to the G-protein coupled receptor 1 family.

The protein localises to the cell membrane. Its function is as follows. Receptor for extracellular adenine nucleotides such as ADP. In platelets, binding to ADP leads to mobilization of intracellular calcium ions via activation of phospholipase C, a change in platelet shape, and ultimately platelet aggregation. In Bos taurus (Bovine), this protein is P2Y purinoceptor 1 (P2RY1).